Here is a 424-residue protein sequence, read N- to C-terminus: MASSNLIQQLQERGLIAQVTDEKALAERLAAGPIALYCGFDPTADSLHLGHLVPLLCLKRFQLAGHRPVALVGGATGLIGDPSFKATERKLNTAETVQEWVEKIKRQVSPFLDFDCGDNSAVAANNYDWFGSMNVLTFLLDIGKHFSVNQMINKEAVKQRLNRDDSGISFTEFSYNLLQGYDFACLNKQYGVALQIGGSDQWGNITSGIDLTRRLHQNTVYGLTVPLITKADGTKFGKTEGGAVWLDPSKTSPYKFYQFWINTADSDVYLFLKFFTFLDLAAIDALEQEDRASDKAPRAQYVLAEEVTRMVHGEQGLAAAKRITASLFSGALADLTEDDFAQLAQDGMPTVHLERVADLQQALVAAELVPSRGQARTLISSNAVSVNGEKQASIDYVFDDADRLYSRYTLLRRGKKHYCLLNWQ.

An L-tyrosine-binding site is contributed by Tyr-37. The short motif at 42–51 is the 'HIGH' region element; that stretch reads PTADSLHLGH. The L-tyrosine site is built by Tyr-175 and Gln-179. The 'KMSKS' region motif lies at 235 to 239; the sequence is KFGKT. Lys-238 contacts ATP. The 58-residue stretch at 357 to 414 folds into the S4 RNA-binding domain; the sequence is ADLQQALVAAELVPSRGQARTLISSNAVSVNGEKQASIDYVFDDADRLYSRYTLLRRG.

This sequence belongs to the class-I aminoacyl-tRNA synthetase family. TyrS type 1 subfamily. In terms of assembly, homodimer.

The protein resides in the cytoplasm. It catalyses the reaction tRNA(Tyr) + L-tyrosine + ATP = L-tyrosyl-tRNA(Tyr) + AMP + diphosphate + H(+). Catalyzes the attachment of tyrosine to tRNA(Tyr) in a two-step reaction: tyrosine is first activated by ATP to form Tyr-AMP and then transferred to the acceptor end of tRNA(Tyr). This is Tyrosine--tRNA ligase from Sodalis glossinidius (strain morsitans).